The following is a 364-amino-acid chain: Alanine racemase (364 aa).

Residue Lys-34 is the Proton acceptor; specific for D-alanine of the active site. N6-(pyridoxal phosphate)lysine is present on Lys-34. A substrate-binding site is contributed by Arg-129. The active-site Proton acceptor; specific for L-alanine is Tyr-259. Met-307 provides a ligand contact to substrate.

The protein belongs to the alanine racemase family. Pyridoxal 5'-phosphate serves as cofactor.

The catalysed reaction is L-alanine = D-alanine. The protein operates within amino-acid biosynthesis; D-alanine biosynthesis; D-alanine from L-alanine: step 1/1. In terms of biological role, catalyzes the interconversion of L-alanine and D-alanine. May also act on other amino acids. In Coxiella burnetii (strain RSA 331 / Henzerling II), this protein is Alanine racemase (alr).